The sequence spans 416 residues: Trehalose synthase (416 aa).

Belongs to the glycosyltransferase group 1 family. Glycosyltransferase 4 subfamily. In terms of assembly, homodimer. It depends on Mg(2+) as a cofactor.

It catalyses the reaction an NDP-alpha-D-glucose + D-glucose = alpha,alpha-trehalose + a ribonucleoside 5'-diphosphate + H(+). Its activity is regulated as follows. Inhibited by 20 mM Fe(3+) and Mn(2+). Partially inhibited by Zn(2+) and Ni(2+). Activity is slightly enhanced by 2 mM Fe (3+), Mn (2+), Ca(2+) or Li(+) and by 20 mM Mg(2+), Ca(2+) or Li(+). Synthesizes trehalose from ADP-glucose and glucose. The reaction is reversible, the equilibrium strongly favors trehalose synthesis. This Rubrobacter xylanophilus (strain DSM 9941 / JCM 11954 / NBRC 16129 / PRD-1) protein is Trehalose synthase.